The sequence spans 545 residues: Chaperonin GroEL (545 aa).

ATP contacts are provided by residues 29–32 (TLGP), 86–90 (DGTTT), Gly413, 476–478 (NAA), and Asp492.

This sequence belongs to the chaperonin (HSP60) family. As to quaternary structure, forms a cylinder of 14 subunits composed of two heptameric rings stacked back-to-back. Interacts with the co-chaperonin GroES.

It localises to the cytoplasm. The catalysed reaction is ATP + H2O + a folded polypeptide = ADP + phosphate + an unfolded polypeptide.. In terms of biological role, together with its co-chaperonin GroES, plays an essential role in assisting protein folding. The GroEL-GroES system forms a nano-cage that allows encapsulation of the non-native substrate proteins and provides a physical environment optimized to promote and accelerate protein folding. The protein is Chaperonin GroEL of Oceanobacillus iheyensis (strain DSM 14371 / CIP 107618 / JCM 11309 / KCTC 3954 / HTE831).